The sequence spans 121 residues: uncharacterized protein (121 aa).

Positions 12–24 (EEGGASAAAPDAS) are enriched in low complexity. Disordered regions lie at residues 12–63 (EEGG…RLEP) and 101–121 (KKLA…SPVV). Basic residues predominate over residues 26–35 (KSKKGARPCF). Residues 40–49 (QAGSCMTGRQ) show a composition bias toward polar residues. Over residues 112-121 (GSQKERSPVV) the composition is skewed to basic and acidic residues.

This is an uncharacterized protein from Homo sapiens (Human).